A 268-amino-acid chain; its full sequence is Ubiquinone biosynthesis protein COQ4 homolog 1, mitochondrial (268 aa).

Positions 1 to 10 (MFLRRVHPVR) are enriched in basic residues. A mitochondrion-targeting transit peptide spans 1 to 18 (MFLRRVHPVRLGHASQRS). Residues 1-44 (MFLRRVHPVRLGHASQRSLTTTKSRNESTTTTVEAPQAAPSPPP) are disordered. The span at 20–38 (TTTKSRNESTTTTVEAPQA) shows a compositional bias: low complexity. Residues His177, Asp178, His181, and Glu193 each coordinate Zn(2+).

The protein belongs to the COQ4 family. Component of a multi-subunit COQ enzyme complex. Requires Zn(2+) as cofactor.

The protein resides in the mitochondrion inner membrane. It carries out the reaction a 4-hydroxy-3-methoxy-5-(all-trans-polyprenyl)benzoate + H(+) = a 2-methoxy-6-(all-trans-polyprenyl)phenol + CO2. It functions in the pathway cofactor biosynthesis; ubiquinone biosynthesis. Functionally, lyase that catalyzes the C1-decarboxylation of 4-hydroxy-3-methoxy-5-(all-trans-polyprenyl)benzoic acid into 2-methoxy-6-(all-trans-polyprenyl)phenol during ubiquinone biosynthesis. The protein is Ubiquinone biosynthesis protein COQ4 homolog 1, mitochondrial of Culex quinquefasciatus (Southern house mosquito).